The chain runs to 375 residues: MASKPEKRVASSVFITLAPPRRDVAVSEEVGQAACEARRARPWEMLPTKTPGAAVGRSPKTWTPSGKTNASLSGVTPQLSNGGCSLPPPSLNEEDLDLPPPPPPPSAYLPLPEEEPPVLPGKSLISDLEQLHLPPPPPPPPPQAPSKGSSVHPPPGHAIPSEEELPPPPEEPVTLPEREVSTDVCGFCHKPVSPRELAVEAMKRQYHAQCFTCRTCRRQLAGQRFYQKDGRPLCEPCYQDTLEKCGKCGEVVQEHVIRALGKAFHPPCFTCVTCARCISDESFALDSQNQVYCVADFYRKFAPVCSICENPIIPRDGKDAFKIECMGRNFHENCYRCEDCSVLLSVEPTDQGCYPLNDHLFCKPCHLKRSAAGCC.

A filamin-binding region spans residues 1–69 (MASKPEKRVA…KTWTPSGKTN (69 aa)). The disordered stretch occupies residues 40–176 (ARPWEMLPTK…PPPEEPVTLP (137 aa)). Residues 60–83 (KTWTPSGKTNASLSGVTPQLSNGG) show a composition bias toward polar residues. Composition is skewed to pro residues over residues 98–107 (LPPPPPPPSA) and 133–144 (LPPPPPPPPPQA). LIM zinc-binding domains are found at residues 183–244 (DVCG…TLEK), 245–302 (CGKC…RKFA), and 303–372 (PVCS…RSAA). The FERMT2-binding stretch occupies residues 278–375 (ISDESFALDS…HLKRSAAGCC (98 aa)).

In terms of assembly, interacts with FERMT2, FLNA, FLNB and FLNC. Interacts with NKX2-5.

Its subcellular location is the cell junction. The protein localises to the focal adhesion. It localises to the cytoplasm. It is found in the cytoskeleton. The protein resides in the stress fiber. In terms of biological role, serves as an anchoring site for cell-ECM adhesion proteins and filamin-containing actin filaments. Is implicated in cell shape modulation (spreading) and motility. May participate in the regulation of filamin-mediated cross-linking and stabilization of actin filaments. May also regulate the assembly of filamin-containing signaling complexes that control actin assembly. Promotes dissociation of FLNA from ITGB3 and ITGB7. Promotes activation of integrins and regulates integrin-mediated cell-cell adhesion. This Mus musculus (Mouse) protein is Filamin-binding LIM protein 1 (Fblim1).